The sequence spans 829 residues: High affinity cAMP-specific and IBMX-insensitive 3',5'-cyclic phosphodiesterase 8A (829 aa).

The tract at residues 16–46 (EDAPSPAAPPLSSGGPRLPQGQKTAALPRTR) is disordered. The residue at position 20 (Ser-20) is a Phosphoserine. The PAS domain occupies 213–283 (ACNSVFTALE…DTINSCIRIG (71 aa)). The PAC domain maps to 287–329 (QGIYYAKKKNGDNIQQNVKIIPVIGQGGKIRHYVSIIRVCNGN). The disordered stretch occupies residues 341-360 (SDTHTDNQTGKHKDRRKGSL). A Phosphoserine; by PKA modification is found at Ser-359. Ser-386 and Ser-457 each carry phosphoserine. Residues 454–461 (RRLSGNEY) are involved in RAF1-binding. A Phosphotyrosine modification is found at Tyr-461. Residues 480–820 (SLDDVPPRIA…KYWKGLDEMK (341 aa)) enclose the PDEase domain. His-556 functions as the Proton donor in the catalytic mechanism. Residues His-560, His-596, Asp-597, and Asp-726 each contribute to the a divalent metal cation site.

Belongs to the cyclic nucleotide phosphodiesterase family. PDE8 subfamily. In terms of assembly, interacts with RAF1. The interaction promotes RAF1 activity. It depends on a divalent metal cation as a cofactor. Post-translationally, phosphorylated at Ser-359 by PKA under elevated cAMP conditions, this enhances catalytic activity. Expressed in most tissues except thymus and peripheral blood leukocytes. Highest levels in testis, ovary, small intestine and colon.

The catalysed reaction is 3',5'-cyclic AMP + H2O = AMP + H(+). The protein operates within purine metabolism; 3',5'-cyclic AMP degradation; AMP from 3',5'-cyclic AMP: step 1/1. With respect to regulation, inhibited by dipyridimole. Insensitive to selective PDE inhibitors including rolipram and zaprinast as well as to the non-selective inhibitor, IBMX. Unaffected by cGMP. In terms of biological role, hydrolyzes the second messenger cAMP, which is a key regulator of many important physiological processes. May be involved in maintaining basal levels of the cyclic nucleotide and/or in the cAMP regulation of germ cell development. Binding to RAF1 reduces RAF1 'Ser-259' inhibitory-phosphorylation and stimulates RAF1-dependent EGF-activated ERK-signaling. Protects against cell death induced by hydrogen peroxide and staurosporine. This Homo sapiens (Human) protein is High affinity cAMP-specific and IBMX-insensitive 3',5'-cyclic phosphodiesterase 8A (PDE8A).